Reading from the N-terminus, the 427-residue chain is Serine hydroxymethyltransferase (427 aa).

(6S)-5,6,7,8-tetrahydrofolate contacts are provided by residues Leu-122 and 126–128 (GHL). Lys-231 is modified (N6-(pyridoxal phosphate)lysine). 355–357 (SPF) serves as a coordination point for (6S)-5,6,7,8-tetrahydrofolate.

Belongs to the SHMT family. As to quaternary structure, homodimer. The cofactor is pyridoxal 5'-phosphate.

The protein resides in the cytoplasm. The catalysed reaction is (6R)-5,10-methylene-5,6,7,8-tetrahydrofolate + glycine + H2O = (6S)-5,6,7,8-tetrahydrofolate + L-serine. The protein operates within one-carbon metabolism; tetrahydrofolate interconversion. Its pathway is amino-acid biosynthesis; glycine biosynthesis; glycine from L-serine: step 1/1. Catalyzes the reversible interconversion of serine and glycine with tetrahydrofolate (THF) serving as the one-carbon carrier. This reaction serves as the major source of one-carbon groups required for the biosynthesis of purines, thymidylate, methionine, and other important biomolecules. Also exhibits THF-independent aldolase activity toward beta-hydroxyamino acids, producing glycine and aldehydes, via a retro-aldol mechanism. In Nostoc punctiforme (strain ATCC 29133 / PCC 73102), this protein is Serine hydroxymethyltransferase.